The following is a 59-amino-acid chain: uncharacterized protein (59 aa).

This is an uncharacterized protein from Archaeoglobus fulgidus (strain ATCC 49558 / DSM 4304 / JCM 9628 / NBRC 100126 / VC-16).